We begin with the raw amino-acid sequence, 645 residues long: Sodium-dependent phosphate transporter 2 (645 aa).

Residues 1 to 5 (MAMDE) are Extracellular-facing. The chain crosses the membrane as a helical span at residues 6–26 (YLWMVILGFIIAFILAFSVGA). The Cytoplasmic segment spans residues 27-46 (NDVANSFGTAVGSGVVTLRQ). The helical transmembrane segment at 47–67 (ACILASIFETTGSVLLGAKVG) threads the bilayer. At 68 to 86 (ETIRKGIIDVNLYNNTVET) the chain is on the extracellular side. N81 is a glycosylation site (N-linked (GlcNAc...) asparagine). A helical transmembrane segment spans residues 87–107 (LMAGEVSAMVGSAVWQLIASF). At 108-109 (LR) the chain is on the cytoplasmic side. The helical transmembrane segment at 110–130 (FPISGTHCIVGATIGFSLVAI) threads the bilayer. The Extracellular portion of the chain corresponds to 131–142 (GTQGVQWMELVK). Residues 143 to 163 (IVASWFISPLLSGFMSGVLFV) form a helical membrane-spanning segment. Residues 164 to 190 (LIRMFILKKEDPVPNGLRALPVFYAAT) lie on the Cytoplasmic side of the membrane. Residues 191–211 (IAINVFSIMYTGAPVMGLVLP) traverse the membrane as a helical segment. At 212-213 (MW) the chain is on the extracellular side. A helical membrane pass occupies residues 214–234 (AIALISFGVALLFALFVWLFV). Residues 235–475 (CPWMRRKITG…EEKEEKDSPE (241 aa)) lie on the Cytoplasmic side of the membrane. Residues S253, S256, S259, S268, S316, and S379 each carry the phosphoserine modification. Residues 275-320 (PGAKAHDDSTVPLTGSAADPSGTSESMSGGHHPRAPYGRALSMTHG) form a disordered region. A disordered region spans residues 448–471 (RLAPPLAEPEPPRDDPADEEKEEK). A helical membrane pass occupies residues 476 to 496 (VHLLFHFLQVLTACFGSFAHG). The Extracellular segment spans residues 497 to 523 (GNDVSNAIGPLVALWLIYEQGAVLQEA). Residues 524-544 (ATPVWLLFYGGVGICTGLWVW) traverse the membrane as a helical segment. The Cytoplasmic segment spans residues 545 to 564 (GRRVIQTMGKDLTPITPSSG). Residues 565 to 579 (FTIELASAFTVVIAS) traverse the membrane as a helical segment. Residues 580–586 (NIGLPVS) are Extracellular-facing. The chain crosses the membrane as a helical span at residues 587–602 (TTHCKVGSVVAVGWIR). Residues 603–614 (SRKAVDWRLFRN) lie on the Cytoplasmic side of the membrane. A helical membrane pass occupies residues 615–635 (IFVAWFVTVPVAGLFSAAIMA). At 636 to 645 (LLIHGILPFV) the chain is on the extracellular side.

The protein belongs to the inorganic phosphate transporter (PiT) (TC 2.A.20) family. Homodimer.

Its subcellular location is the cell membrane. The protein resides in the apical cell membrane. The catalysed reaction is 2 Na(+)(out) + phosphate(out) = 2 Na(+)(in) + phosphate(in). Sodium-phosphate symporter which preferentially transports the monovalent form of phosphate with a stoichiometry of two sodium ions per phosphate ion. Plays a critical role in the determination of bone quality and strength by providing phosphate for bone mineralization. Required to maintain normal cerebrospinal fluid phosphate levels. Mediates phosphate-induced calcification of vascular smooth muscle cells (VCMCs) and can functionally compensate for loss of SLC20A1 in VCMCs. The chain is Sodium-dependent phosphate transporter 2 (SLC20A2) from Bos taurus (Bovine).